Here is a 166-residue protein sequence, read N- to C-terminus: Cofilin-2 (166 aa).

The ADF-H domain maps to 4 to 153 (GVTVNDEVIK…KDRSTLGEKL (150 aa)). Ser24 bears the Phosphoserine mark. Positions 30-34 (KKRKK) match the Nuclear localization signal motif.

It belongs to the actin-binding proteins ADF family. The phosphorylation of Ser-24 may prevent recognition of the nuclear localization signal. Widely distributed in various tissues.

It is found in the nucleus matrix. Its subcellular location is the cytoplasm. It localises to the cytoskeleton. In terms of biological role, controls reversibly actin polymerization and depolymerization in a pH-sensitive manner. It has the ability to bind G- and F-actin in a 1:1 ratio of cofilin to actin. It is the major component of intranuclear and cytoplasmic actin rods. This Gallus gallus (Chicken) protein is Cofilin-2 (CFL2).